A 306-amino-acid chain; its full sequence is Mitochondrial basic amino acids transporter (306 aa).

6 helical membrane passes run 2–22, 61–81, 96–116, 153–172, 187–207, and 255–275; these read ALDFLAGCAGGVAGVIVGHPF, GLGSPLMGLTFINALVFGVQG, FLAGAAAGAIQCVICCPMELA, GMVSTLLRETPSFGVYFLTY, LLVPKLLLAGGTSGITSWLST, and LLRAFPVNAATFATVTVVLTY. Solcar repeat units follow at residues 2–86, 90–178, and 190–275; these read ALDF…TLRA, DSPL…MTRA, and PKLL…VLTY. Residues 284–306 are disordered; the sequence is DSEAALGTSPTPAGSALAQPSSL. Residues 291 to 306 are compositionally biased toward polar residues; that stretch reads TSPTPAGSALAQPSSL.

The protein belongs to the mitochondrial carrier (TC 2.A.29) family. In terms of tissue distribution, widely expressed, with highest levels in the brain, including cortex, cerebellum, hippocampus and hypothalamus, and moderate levels in liver, kidney, heart and testis.

It is found in the mitochondrion inner membrane. The catalysed reaction is L-lysine(out) + L-arginine(in) = L-lysine(in) + L-arginine(out). The enzyme catalyses L-histidine(out) + L-arginine(in) = L-histidine(in) + L-arginine(out). It carries out the reaction L-ornithine(in) + L-arginine(out) = L-ornithine(out) + L-arginine(in). It catalyses the reaction L-homoarginine(in) + L-arginine(out) = L-homoarginine(out) + L-arginine(in). The catalysed reaction is N(omega)-methyl-L-arginine(in) + L-arginine(out) = N(omega)-methyl-L-arginine(out) + L-arginine(in). The enzyme catalyses L-arginine(in) = L-arginine(out). It carries out the reaction L-lysine(in) = L-lysine(out). It catalyses the reaction L-ornithine(in) = L-ornithine(out). The catalysed reaction is L-histidine(out) = L-histidine(in). In terms of biological role, mitochondrial transporter of arginine, lysine, homoarginine, methylarginine. Transports with a much lesser extent, ornithine and histidine. Does not transport carnitine nor acylcarnitines. Functions by both counter-exchange and uniport mechanisms. Plays a physiological role in the import of basic amino acids into mitochondria for mitochondrial protein synthesis and amino acid degradation. This chain is Mitochondrial basic amino acids transporter (Slc25a29), found in Mus musculus (Mouse).